We begin with the raw amino-acid sequence, 276 residues long: NH(3)-dependent NAD(+) synthetase (276 aa).

Residue 43-50 (GISGGVDS) participates in ATP binding. Asp-49 is a binding site for Mg(2+). Arg-146 contributes to the deamido-NAD(+) binding site. Position 166 (Thr-166) interacts with ATP. Glu-171 provides a ligand contact to Mg(2+). Residues Lys-179 and Asp-186 each contribute to the deamido-NAD(+) site. The ATP site is built by Lys-195 and Thr-217. Residue 266–267 (HK) coordinates deamido-NAD(+).

It belongs to the NAD synthetase family. In terms of assembly, homodimer.

The enzyme catalyses deamido-NAD(+) + NH4(+) + ATP = AMP + diphosphate + NAD(+) + H(+). It participates in cofactor biosynthesis; NAD(+) biosynthesis; NAD(+) from deamido-NAD(+) (ammonia route): step 1/1. Functionally, catalyzes the ATP-dependent amidation of deamido-NAD to form NAD. Uses ammonia as a nitrogen source. This Vibrio cholerae serotype O1 (strain ATCC 39541 / Classical Ogawa 395 / O395) protein is NH(3)-dependent NAD(+) synthetase.